Consider the following 74-residue polypeptide: Large ribosomal subunit protein bL27c (74 aa).

This sequence belongs to the bacterial ribosomal protein bL27 family.

Its subcellular location is the plastid. It localises to the chloroplast. The sequence is that of Large ribosomal subunit protein bL27c (rpl27) from Calyptrosphaera sphaeroidea.